Here is a 375-residue protein sequence, read N- to C-terminus: 4,4'-diaponeurosporenoate glycosyltransferase (375 aa).

A run of 4 helical transmembrane segments spans residues 7-23 (LLHA…YLMY), 112-132 (ACYL…DADV), 280-300 (IMML…GLAL), and 333-353 (FSIL…LVYI).

Belongs to the glycosyltransferase 2 family. CrtQ subfamily.

The protein localises to the cell membrane. It participates in carotenoid biosynthesis; staphyloxanthin biosynthesis; staphyloxanthin from farnesyl diphosphate: step 4/5. Functionally, catalyzes the glycosylation of 4,4'-diaponeurosporenoate, i.e. the esterification of glucose at the C1'' position with the carboxyl group of 4,4'-diaponeurosporenic acid, to form glycosyl-4,4'-diaponeurosporenoate. This is a step in the biosynthesis of staphyloxanthin, an orange pigment present in most staphylococci strains. This is 4,4'-diaponeurosporenoate glycosyltransferase (crtQ) from Staphylococcus haemolyticus (strain JCSC1435).